Consider the following 85-residue polypeptide: Small ribosomal subunit protein uS17 (85 aa).

The protein belongs to the universal ribosomal protein uS17 family. In terms of assembly, part of the 30S ribosomal subunit.

Its function is as follows. One of the primary rRNA binding proteins, it binds specifically to the 5'-end of 16S ribosomal RNA. This chain is Small ribosomal subunit protein uS17, found in Desulforapulum autotrophicum (strain ATCC 43914 / DSM 3382 / VKM B-1955 / HRM2) (Desulfobacterium autotrophicum).